We begin with the raw amino-acid sequence, 47 residues long: GTCAGQDKPCKETCDCCGERGQCVCEGPCICRQGYFWIAAYKLGNCK.

5 disulfides stabilise this stretch: cysteine 3–cysteine 17, cysteine 10–cysteine 23, cysteine 14–cysteine 46, cysteine 16–cysteine 31, and cysteine 25–cysteine 29.

Expressed by the venom gland.

The protein localises to the secreted. In terms of biological role, blocks voltage-gated sodium channels (Nav). Causes rapid general spastic paralysis and death when injected in mice at dose levels of less than 2 ug per mouse. This chain is Delta-ctenitoxin-Pr2d, found in Phoneutria reidyi (Brazilian Amazonian armed spider).